A 213-amino-acid polypeptide reads, in one-letter code: Protein-L-isoaspartate O-methyltransferase (213 aa).

Serine 64 is a catalytic residue.

The protein belongs to the methyltransferase superfamily. L-isoaspartyl/D-aspartyl protein methyltransferase family.

The protein resides in the cytoplasm. It catalyses the reaction [protein]-L-isoaspartate + S-adenosyl-L-methionine = [protein]-L-isoaspartate alpha-methyl ester + S-adenosyl-L-homocysteine. Its function is as follows. Catalyzes the methyl esterification of L-isoaspartyl residues in peptides and proteins that result from spontaneous decomposition of normal L-aspartyl and L-asparaginyl residues. It plays a role in the repair and/or degradation of damaged proteins. The chain is Protein-L-isoaspartate O-methyltransferase from Christiangramia forsetii (strain DSM 17595 / CGMCC 1.15422 / KT0803) (Gramella forsetii).